The chain runs to 431 residues: MKLWKPTLISVLSALTLFNAHAEPKQLDSVAVIVNSGVILQSDVDSALKTIKANAKQNKQPLPQETVLREQVLEKLIIDTLQQQEADRIGVKIDDNRLNEAIKEIAKNNQQTQEQLIASVAQEGLTYPEFREQVRKEMAASDARNALVRRRINILPAEVDTLAELLAQETDATVQYKISHIQLRVDDGQDKSTAETLANKLVNDLRNGADFAQMAYAYSKGPKALQGGDWGWMRKEEMPTIFADQIKMQNKGSIIGPFRSGVGFHILKIDDVKGLETVAVTEVNARHILIKPTIILSDEGAQKQLNEFVQRIKNGEVTFAELAQQYSQDPGSAAQKGELGYQTPDLYVPEFKHQIETLPVGQISEPFKTVHGWHIVEVLDRREVDRTDSALKNKAYRILFNRKFNEEASAWLQELRASAFVEVLKDEKDEQ.

Positions M1 to A22 are cleaved as a signal peptide. PpiC domains lie at T173–D271 and V280–D380.

Its subcellular location is the periplasm. The catalysed reaction is [protein]-peptidylproline (omega=180) = [protein]-peptidylproline (omega=0). In terms of biological role, chaperone involved in the correct folding and assembly of outer membrane proteins. Recognizes specific patterns of aromatic residues and the orientation of their side chains, which are found more frequently in integral outer membrane proteins. May act in both early periplasmic and late outer membrane-associated steps of protein maturation. The protein is Chaperone SurA of Vibrio cholerae serotype O1 (strain ATCC 39315 / El Tor Inaba N16961).